The primary structure comprises 275 residues: Transmembrane protein 45A (275 aa).

A run of 5 helical transmembrane segments spans residues 7–27 (HALPGTFFFIIGLWWCTKSIL), 51–71 (ILEGITIVGMALTGMAGEQFI), 100–120 (FFFGLLGVADILCFTISSLPV), 150–170 (IFVHQLLVLVVFLTGLVAFLE), and 218–238 (ILFLTICFCWHYAVTIVIVGM).

Belongs to the TMEM45 family.

The protein resides in the membrane. The polypeptide is Transmembrane protein 45A (TMEM45A) (Homo sapiens (Human)).